A 261-amino-acid polypeptide reads, in one-letter code: High-affinity zinc uptake system membrane protein ZnuB (261 aa).

7 consecutive transmembrane segments (helical) span residues 8-28 (ALLTGIVLSLITAPLGVFVVW), 54-74 (VNPYIAIVVLTLILAIAMVWL), 84-104 (TLLGIIAHSCLSLGVVTVGLL), 125-145 (TDLIYIGIGVIIVLSTLIYFW), 171-191 (ILMILTALTIALSMKFVGALI), 214-234 (VGWAIIMSMLSIIGGLILSAF), and 236-256 (DTAAGPSVVICSAFLFVLSLF).

The protein belongs to the ABC-3 integral membrane protein family.

The protein resides in the cell inner membrane. Involved in the high-affinity zinc uptake transport system. In Haemophilus influenzae (strain ATCC 51907 / DSM 11121 / KW20 / Rd), this protein is High-affinity zinc uptake system membrane protein ZnuB (znuB).